The sequence spans 319 residues: Ribonucleoside-diphosphate reductase small chain (319 aa).

Positions 70, 101, and 104 each coordinate Fe cation. The active site involves Y108. Residues E163, E197, and H200 each coordinate Fe cation. The interaction with R1 stretch occupies residues 313–319 (FSLDVDF).

The protein belongs to the ribonucleoside diphosphate reductase small chain family. In terms of assembly, interacts with RNR1/OPG080 subunit. Can interact with host RNR1 supunit. Requires Fe cation as cofactor.

It carries out the reaction a 2'-deoxyribonucleoside 5'-diphosphate + [thioredoxin]-disulfide + H2O = a ribonucleoside 5'-diphosphate + [thioredoxin]-dithiol. Ribonucleoside-diphosphate reductase holoenzyme provides the precursors necessary for viral DNA synthesis. Allows virus growth in non-dividing cells. Catalyzes the biosynthesis of deoxyribonucleotides from the corresponding ribonucleotides. The chain is Ribonucleoside-diphosphate reductase small chain (OPG048) from Bos taurus (Bovine).